Consider the following 503-residue polypeptide: MSARGQDIVSIIKEQIKEFGAPVSMTSVGSVIEVGDGIARIHGLSNAKYNELLEFPGGVLGIALNLEEDSVAAVILGEDSNIKEGDEVKATGRISEITVGKGMIGRVVDPLGRPLDGKGPIKAESTRPLERIAPNVVDRKSVNTPVQTGIKAIDAMIPIGRGQRELIIGDRSTGKTAIALDTIINQKGGDLVCIYVAIGQKASKVARIVALLEQYGAMEHTIVVAANSSDAVALQYLAPYAGCAIGEEFMEQGKDALVVYDDLTKHAWAYRQLSLLLRRPPGREAYPGDLFYLHSRLLERAARLNDKLGGGSLTALPIIETQAGDVSAYVPTNVISITDGQIYLEPDMFNAGIRPAVNVGISVSRVGSSAQTKAMKKVAGKLKMDMGQYRELAAFAQFGTSELDKSTRMQLERGQRVTEVLKQGQYQPVPAAKQVAILYATLNGYLDNIEVGKVRDYESGLYRFLEANFASVLTAIAKENVISADTEKTLKTALDEYKKGLVV.

169 to 176 (GDRSTGKT) contributes to the ATP binding site.

The protein belongs to the ATPase alpha/beta chains family. In terms of assembly, F-type ATPases have 2 components, CF(1) - the catalytic core - and CF(0) - the membrane proton channel. CF(1) has five subunits: alpha(3), beta(3), gamma(1), delta(1), epsilon(1). CF(0) has three main subunits: a(1), b(2) and c(9-12). The alpha and beta chains form an alternating ring which encloses part of the gamma chain. CF(1) is attached to CF(0) by a central stalk formed by the gamma and epsilon chains, while a peripheral stalk is formed by the delta and b chains.

The protein resides in the cell membrane. The enzyme catalyses ATP + H2O + 4 H(+)(in) = ADP + phosphate + 5 H(+)(out). Produces ATP from ADP in the presence of a proton gradient across the membrane. The alpha chain is a regulatory subunit. This chain is ATP synthase subunit alpha, found in Dehalococcoides mccartyi (strain ATCC BAA-2100 / JCM 16839 / KCTC 5957 / BAV1).